We begin with the raw amino-acid sequence, 352 residues long: C-X-C chemokine receptor type 4 (352 aa).

An important for chemokine binding and signaling region spans residues 1 to 21 (MEGISIYTSDNYTEEMGSGDY). The Extracellular portion of the chain corresponds to 1–38 (MEGISIYTSDNYTEEMGSGDYDSIKEPCFREENAHFNR). Tyrosine 7 is modified (sulfotyrosine). A glycan (N-linked (GlcNAc...) asparagine) is linked at asparagine 11. The residue at position 12 (tyrosine 12) is a Sulfotyrosine. Serine 18 carries an O-linked (Xyl...) (chondroitin sulfate) serine glycan. The residue at position 21 (tyrosine 21) is a Sulfotyrosine. Disulfide bonds link cysteine 28-cysteine 274 and cysteine 109-cysteine 186. Residues 39 to 63 (IFLPTIYSIIFLTGIVGNGLVILVM) form a helical membrane-spanning segment. Topologically, residues 64 to 77 (GYQKKLRSMTDKYR) are cytoplasmic. A helical membrane pass occupies residues 78–99 (LHLSVADLLFVITLPFWAVDAV). The chemokine binding stretch occupies residues 94-97 (WAVD). The Extracellular segment spans residues 100–110 (ANWYFGNFLCK). A helical membrane pass occupies residues 111–130 (AVHVIYTVNLYSSVLILAFI). The interval 113 to 117 (HVIYT) is chemokine binding. Over 131–154 (SLDRYLAIVHATNSQKPRKLLAEK) the chain is Cytoplasmic. The Important for signaling signature appears at 133 to 135 (DRY). Positions 135-147 (YLAIVHATNSQKP) are involved in dimerization; when bound to chemokine. A helical membrane pass occupies residues 155–174 (VVYVGVWIPALLLTIPDFIF). The Extracellular segment spans residues 175–195 (ASVSEADDRYICDRFYPNDLW). The segment at 186–190 (CDRFY) is chemokine binding, important for signaling. Residues 191-210 (PNDLWVVVFQFQHIMVGLIL) are involved in dimerization. Residues 196 to 216 (VVVFQFQHIMVGLILPGIVIL) traverse the membrane as a helical segment. Residues 217 to 241 (SCYCIIISKLSHSKGHQKRKALKTT) lie on the Cytoplasmic side of the membrane. A helical membrane pass occupies residues 242–261 (VILILAFFACWLPYYIGISI). Residues 262–282 (DSFILLEIIKQGCEFENTVHK) are Extracellular-facing. Residues 266 to 268 (LLE) are involved in dimerization. Residues 283–302 (WISITEALAFFHCCLNPILY) form a helical membrane-spanning segment. Topologically, residues 303–352 (AFLGAKFKTSAQHALTSVSRGSSLKILSKGKRGGHSSVSTESESSSFHSS) are cytoplasmic. 2 positions are modified to phosphoserine: serine 319 and serine 321. Residues serine 324 and serine 325 each carry the phosphoserine; by PKC and GRK6 modification. The segment at 329–352 (LSKGKRGGHSSVSTESESSSFHSS) is disordered. Serine 330 is modified (phosphoserine; by GRK6). Residue lysine 331 forms a Glycyl lysine isopeptide (Lys-Gly) (interchain with G-Cter in ubiquitin) linkage. Residues 337-352 (HSSVSTESESSSFHSS) are compositionally biased toward low complexity. Position 339 is a phosphoserine; by GRK6 (serine 339). 2 positions are modified to phosphoserine: serine 348 and serine 351.

Belongs to the G-protein coupled receptor 1 family. Monomer. Can form homodimers. Interacts with CD164. Interacts with ARRB2; the interaction is dependent on the C-terminal phosphorylation of CXCR4 and allows activation of MAPK1 and MAPK3. Interacts with ARR3; the interaction is dependent on the C-terminal phosphorylation of CXCR4 and modulates calcium mobilization. Interacts with RNF113A; the interaction, enhanced by CXCL12, promotes CXCR4 ubiquitination and subsequent degradation. Interacts (via the cytoplasmic C-terminal) with ITCH (via the WW domains I and II); the interaction, enhanced by CXCL12, promotes CXCR4 ubiquitination and leads to its degradation. Interacts with extracellular ubiquitin. Interacts with DBN1; this interaction is enhanced by antigenic stimulation. Following LPS binding, may form a complex with GDF5, HSP90AA1 and HSPA8. In terms of processing, phosphorylated on agonist stimulation. Rapidly phosphorylated on serine and threonine residues in the C-terminal. Phosphorylation at Ser-324 and Ser-325 leads to recruitment of ITCH, ubiquitination and protein degradation. Post-translationally, ubiquitinated after ligand binding, leading to its degradation. Ubiquitinated by ITCH at the cell membrane on agonist stimulation. The ubiquitin-dependent mechanism, endosomal sorting complex required for transport (ESCRT), then targets CXCR4 for lysosomal degradation. This process is dependent also on prior Ser-/Thr-phosphorylation in the C-terminal of CXCR4. Also binding of ARRB1 to STAM negatively regulates CXCR4 sorting to lysosomes though modulating ubiquitination of SFR5S. Sulfation is required for efficient binding of CXCL12/SDF-1alpha and promotes its dimerization. In terms of processing, O- and N-glycosylated. N-glycosylation can mask coreceptor function. The O-glycosylation chondroitin sulfate attachment does not affect interaction with CXCL12/SDF-1alpha nor its coreceptor activity.

It is found in the cell membrane. The protein localises to the cell junction. Its subcellular location is the early endosome. The protein resides in the late endosome. It localises to the lysosome. Its function is as follows. Receptor for the C-X-C chemokine CXCL12/SDF-1 that transduces a signal by increasing intracellular calcium ion levels and enhancing MAPK1/MAPK3 activation. Involved in the AKT signaling cascade. Plays a role in regulation of cell migration, e.g. during wound healing. Acts as a receptor for extracellular ubiquitin; leading to enhanced intracellular calcium ions and reduced cellular cAMP levels. Binds bacterial lipopolysaccharide (LPS) et mediates LPS-induced inflammatory response, including TNF secretion by monocytes. Involved in hematopoiesis and in cardiac ventricular septum formation. Also plays an essential role in vascularization of the gastrointestinal tract, probably by regulating vascular branching and/or remodeling processes in endothelial cells. Involved in cerebellar development. In the CNS, could mediate hippocampal-neuron survival. This is C-X-C chemokine receptor type 4 (CXCR4) from Macaca fascicularis (Crab-eating macaque).